The following is a 511-amino-acid chain: uncharacterized protein (511 aa).

The interval 59-79 is disordered; it reads VPVAANDDQPDGSRQSVRGRQ.

It belongs to the transposase 25 family.

This is an uncharacterized protein from Sinorhizobium fredii (strain NBRC 101917 / NGR234).